The sequence spans 413 residues: Na(+)/H(+) antiporter NhaA (413 aa).

Helical transmembrane passes span 15–35 (LESG…ALFV), 57–77 (LLHW…GLEI), 93–113 (ALPC…YASL), 123–143 (GWAI…SLLG), 152–172 (IFLA…IAVF), 175–195 (AELN…LLGF), 211–231 (VALW…GVVL), 261–281 (WVAF…SFAG), 295–315 (VALG…WLAI), 333–353 (GVSL…LLAF), and 364–384 (VGVL…LSLT).

This sequence belongs to the NhaA Na(+)/H(+) (TC 2.A.33) antiporter family.

Its subcellular location is the cell inner membrane. It carries out the reaction Na(+)(in) + 2 H(+)(out) = Na(+)(out) + 2 H(+)(in). Its function is as follows. Na(+)/H(+) antiporter that extrudes sodium in exchange for external protons. The polypeptide is Na(+)/H(+) antiporter NhaA (Caulobacter vibrioides (strain ATCC 19089 / CIP 103742 / CB 15) (Caulobacter crescentus)).